Consider the following 271-residue polypeptide: Acetyl-coenzyme A carboxylase carboxyl transferase subunit alpha (271 aa).

The 247-residue stretch at 1 to 247 (MSRELIRTAD…KKTILEALGE (247 aa)) folds into the CoA carboxyltransferase C-terminal domain.

Belongs to the AccA family. In terms of assembly, acetyl-CoA carboxylase is a heterohexamer composed of biotin carboxyl carrier protein (AccB), biotin carboxylase (AccC) and two subunits each of ACCase subunit alpha (AccA) and ACCase subunit beta (AccD).

The protein resides in the cytoplasm. It carries out the reaction N(6)-carboxybiotinyl-L-lysyl-[protein] + acetyl-CoA = N(6)-biotinyl-L-lysyl-[protein] + malonyl-CoA. The protein operates within lipid metabolism; malonyl-CoA biosynthesis; malonyl-CoA from acetyl-CoA: step 1/1. Its function is as follows. Component of the acetyl coenzyme A carboxylase (ACC) complex. First, biotin carboxylase catalyzes the carboxylation of biotin on its carrier protein (BCCP) and then the CO(2) group is transferred by the carboxyltransferase to acetyl-CoA to form malonyl-CoA. This Clostridium perfringens (strain 13 / Type A) protein is Acetyl-coenzyme A carboxylase carboxyl transferase subunit alpha.